The following is a 917-amino-acid chain: Transcriptional regulatory protein SEF1 (917 aa).

Residues 1 to 88 (MKFEKGKVRI…SKPTGHRPVT (88 aa)) form a disordered region. Residues 13–27 (KPSPTPTNPQTPLPL) are compositionally biased toward pro residues. The span at 56-70 (SNSTASTPNSATPTS) shows a compositional bias: low complexity. The segment covering 71–81 (VGTPPQKTSKP) has biased composition (polar residues). Positions 90 to 120 (CTFCRQHKIKCNASDNYPNPCERCKKMGLKC) form a DNA-binding region, zn(2)-C6 fungal-type. The stretch at 129–164 (RKGSQIQSLKSDVDELKAKIEMLTKNESLLTQALNQ) forms a coiled coil. Disordered regions lie at residues 168-212 (NHAS…ASPI) and 778-849 (QQYP…PFIL). The segment covering 171–184 (SQQQQSSGSQSQQQ) has biased composition (low complexity). Residues 191–212 (RALSYTSANSSPQVAFSNASPI) are compositionally biased toward polar residues. Residues 778–827 (QQYPMQQDQQQQEPSQQQQQKHSQQSQQYQQQQQSNQQQPHLQHQRQFQQ) show a composition bias toward low complexity.

As to quaternary structure, interacts with SSN3 and SFU1. In terms of processing, phosphorylated by SSN3 under iron-depleted conditions which leads to nuclear localization.

It is found in the cytoplasm. It localises to the nucleus. Functionally, transcription factor which plays an essential role in virulence by activating the transcription of iron uptake genes such as FRE7 in iron-poor environments such as the host bloodstream and internal organs. Promotes commensalism in a mouse model of gastrointestinal infection. The polypeptide is Transcriptional regulatory protein SEF1 (SEF1) (Candida albicans (strain SC5314 / ATCC MYA-2876) (Yeast)).